Reading from the N-terminus, the 119-residue chain is Holo-[acyl-carrier-protein] synthase (119 aa).

2 residues coordinate Mg(2+): D8 and E58.

This sequence belongs to the P-Pant transferase superfamily. AcpS family. It depends on Mg(2+) as a cofactor.

The protein localises to the cytoplasm. It catalyses the reaction apo-[ACP] + CoA = holo-[ACP] + adenosine 3',5'-bisphosphate + H(+). Functionally, transfers the 4'-phosphopantetheine moiety from coenzyme A to a Ser of acyl-carrier-protein. The chain is Holo-[acyl-carrier-protein] synthase from Bacillus cereus (strain G9842).